Here is a 419-residue protein sequence, read N- to C-terminus: Serine/threonine-protein kinase Kist (419 aa).

One can recognise a Protein kinase domain in the interval 23–303; sequence WQVQSRLGSG…PAEMALCSPF (281 aa). ATP contacts are provided by residues 29 to 37 and Lys54; that span reads LGSGSSASV. The active-site Proton acceptor is Asp158. The 83-residue stretch at 323–405 folds into the RRM domain; sequence LRLLNVLDDD…GKFVVATFYP (83 aa).

This sequence belongs to the protein kinase superfamily. Ser/Thr protein kinase family. Interacts with PAM and CDKN1B/p27Kip1. Interacts with stathmin.

It is found in the nucleus. It catalyses the reaction L-seryl-[protein] + ATP = O-phospho-L-seryl-[protein] + ADP + H(+). The enzyme catalyses L-threonyl-[protein] + ATP = O-phospho-L-threonyl-[protein] + ADP + H(+). Its function is as follows. Upon serum stimulation, phosphorylates CDKN1B/p27Kip1, thus controlling CDKN1B subcellular location and cell cycle progression in G1 phase. May be involved in trafficking and/or processing of RNA. The sequence is that of Serine/threonine-protein kinase Kist (Uhmk1) from Mus musculus (Mouse).